A 105-amino-acid chain; its full sequence is Pyrimidine/purine nucleoside phosphorylase (105 aa).

It belongs to the nucleoside phosphorylase PpnP family.

It catalyses the reaction a purine D-ribonucleoside + phosphate = a purine nucleobase + alpha-D-ribose 1-phosphate. The catalysed reaction is adenosine + phosphate = alpha-D-ribose 1-phosphate + adenine. The enzyme catalyses cytidine + phosphate = cytosine + alpha-D-ribose 1-phosphate. It carries out the reaction guanosine + phosphate = alpha-D-ribose 1-phosphate + guanine. It catalyses the reaction inosine + phosphate = alpha-D-ribose 1-phosphate + hypoxanthine. The catalysed reaction is thymidine + phosphate = 2-deoxy-alpha-D-ribose 1-phosphate + thymine. The enzyme catalyses uridine + phosphate = alpha-D-ribose 1-phosphate + uracil. It carries out the reaction xanthosine + phosphate = alpha-D-ribose 1-phosphate + xanthine. In terms of biological role, catalyzes the phosphorolysis of diverse nucleosides, yielding D-ribose 1-phosphate and the respective free bases. Can use uridine, adenosine, guanosine, cytidine, thymidine, inosine and xanthosine as substrates. Also catalyzes the reverse reactions. In Cupriavidus pinatubonensis (strain JMP 134 / LMG 1197) (Cupriavidus necator (strain JMP 134)), this protein is Pyrimidine/purine nucleoside phosphorylase.